Here is a 1013-residue protein sequence, read N- to C-terminus: MGLGTLSPRMLVWLVASGIVFYGELWVCAGLDYDYTFDGNEEDKTETIDYKDPCKAAVFWGDIALDDEDLNIFQIDRTIDLTQNPFGNLGHTTGGLGDHAMSKKRGALYQLIDRIRRIGFGLEQNNTVKGKVPLQFSGQNEKNRVPRAATSRTERIWPGGVIPYVIGGNFTGSQRAMFKQAMRHWEKHTCVTFIERSDEESYIVFTYRPCGCCSYVGRRGNGPQAISIGKNCDKFGIVVHELGHVIGFWHEHTRPDRDNHVTIIRENIQPGQEYNFLKMEPGEVNSLGERYDFDSIMHYARNTFSRGMFLDTILPSRDDNGIRPAIGQRTRLSKGDIAQARKLYRCPACGETLQESNGNLSSPGFPNGYPSYTHCIWRVSVTPGEKIVLNFTTMDLYKSSLCWYDYIEVRDGYWRKSPLLGRFCGDKLPEVLTSTDSRMWIEFRSSSNWVGKGFAAVYEAICGGEIRKNEGQIQSPNYPDDYRPMKECVWKITVSESYHVGLTFQSFEIERHDNCAYDYLEVRDGTSENSPLIGRFCGYDKPEDIRSTSNTLWMKFVSDGTVNKAGFAANFFKEEDECAKPDRGGCEQRCLNTLGSYQCACEPGYELGPDRRSCEAACGGLLTKLNGTITTPGWPKEYPPNKNCVWQVVAPTQYRISVKFEFFELEGNEVCKYDYVEIWSGLSSESKLHGKFCGAEVPEVITSQFNNMRIEFKSDNTVSKKGFKAHFFSDKDECSKDNGGCQHECVNTMGSYMCQCRNGFVLHDNKHDCKEAECEQKIHSPSGLITSPNWPDKYPSRKECTWEISATPGHRIKLAFSEFEIEQHQECAYDHLEVFDGETEKSPILGRLCGNKIPDPLVATGNKMFVRFVSDASVQRKGFQATHSTECGGRLKAESKPRDLYSHAQFGDNNYPGQVDCEWLLVSERGSRLELSFQTFEVEEEADCGYDYVELFDGLDSTAVGLGRFCGSGPPEEIYSIGDSVLIHFHTDDTINKKGFHIRYKSIRYPDTTHTKK.

A signal peptide spans 1-30 (MGLGTLSPRMLVWLVASGIVFYGELWVCAG). A propeptide spanning residues 31–147 (LDYDYTFDGN…GQNEKNRVPR (117 aa)) is cleaved from the precursor. In terms of domain architecture, Peptidase M12A spans 148-347 (AATSRTERIW…AQARKLYRCP (200 aa)). An N-linked (GlcNAc...) asparagine glycan is attached at Asn-169. 4 cysteine pairs are disulfide-bonded: Cys-190-Cys-346, Cys-210-Cys-232, Cys-212-Cys-213, and Cys-349-Cys-375. His-240 contributes to the Zn(2+) binding site. Residue Glu-241 is part of the active site. Residues His-244 and His-250 each contribute to the Zn(2+) site. CUB domains lie at 349-461 (CGET…YEAI) and 462-574 (CGGE…FFKE). Asn-359 and Asn-390 each carry an N-linked (GlcNAc...) asparagine glycan. Disulfide bonds link Cys-402–Cys-424, Cys-462–Cys-488, Cys-515–Cys-537, Cys-578–Cys-590, Cys-586–Cys-599, Cys-601–Cys-614, Cys-618–Cys-644, Cys-671–Cys-693, Cys-734–Cys-745, Cys-741–Cys-754, Cys-756–Cys-769, Cys-774–Cys-800, Cys-827–Cys-849, Cys-887–Cys-917, and Cys-944–Cys-966. Residues 574–615 (EEDECAKPDRGGCEQRCLNTLGSYQCACEPGYELGPDRRSCE) enclose the EGF-like 1; calcium-binding domain. The CUB 3 domain occupies 618-730 (CGGLLTKLNG…KGFKAHFFSD (113 aa)). Residue Asn-626 is glycosylated (N-linked (GlcNAc...) asparagine). The EGF-like 2; calcium-binding domain maps to 730–770 (DKDECSKDNGGCQHECVNTMGSYMCQCRNGFVLHDNKHDCK). CUB domains are found at residues 774–886 (CEQK…HSTE) and 887–1003 (CGGR…YKSI).

It depends on Zn(2+) as a cofactor.

The protein localises to the secreted. Protease which processes procollagen C-propeptides, such as chordin, pro-biglycan and pro-lysyl oxidase. Required for the embryonic development. Predominant protease, which in the development, influences dorsal-ventral patterning and skeletogenesis. The sequence is that of Tolloid-like protein 1 (TLL1) from Homo sapiens (Human).